A 649-amino-acid polypeptide reads, in one-letter code: tRNA-guanine(15) transglycosylase (649 aa).

Asp88 serves as the catalytic Nucleophile. Substrate-binding residues include Asp123 and Ala194. Zn(2+) is bound by residues Cys280, Cys282, and Cys285. Residues 573–648 (KYRIVIDSSV…VAATLRGGLK (76 aa)) enclose the PUA domain.

The protein belongs to the archaeosine tRNA-ribosyltransferase family. The cofactor is Zn(2+).

It carries out the reaction guanosine(15) in tRNA + 7-cyano-7-deazaguanine = 7-cyano-7-carbaguanosine(15) in tRNA + guanine. Its pathway is tRNA modification; archaeosine-tRNA biosynthesis. Exchanges the guanine residue with 7-cyano-7-deazaguanine (preQ0) at position 15 in the dihydrouridine loop (D-loop) of archaeal tRNAs. This chain is tRNA-guanine(15) transglycosylase, found in Methanococcus maripaludis (strain C6 / ATCC BAA-1332).